A 126-amino-acid chain; its full sequence is Protein ApaG (126 aa).

In terms of domain architecture, ApaG spans 2–126 (SDPRYQIDVS…FRLAVPGALH (125 aa)).

This Pseudomonas fluorescens (strain SBW25) protein is Protein ApaG.